A 426-amino-acid chain; its full sequence is Glutamyl-tRNA reductase (426 aa).

Substrate-binding positions include 52-55 (TCNR), S110, 115-117 (EYE), and Q121. C53 acts as the Nucleophile in catalysis. 190–195 (GAGEMA) contributes to the NADP(+) binding site.

This sequence belongs to the glutamyl-tRNA reductase family. As to quaternary structure, homodimer.

The catalysed reaction is (S)-4-amino-5-oxopentanoate + tRNA(Glu) + NADP(+) = L-glutamyl-tRNA(Glu) + NADPH + H(+). The protein operates within porphyrin-containing compound metabolism; protoporphyrin-IX biosynthesis; 5-aminolevulinate from L-glutamyl-tRNA(Glu): step 1/2. Its function is as follows. Catalyzes the NADPH-dependent reduction of glutamyl-tRNA(Glu) to glutamate 1-semialdehyde (GSA). The protein is Glutamyl-tRNA reductase of Saccharolobus solfataricus (strain ATCC 35092 / DSM 1617 / JCM 11322 / P2) (Sulfolobus solfataricus).